The chain runs to 66 residues: Large ribosomal subunit protein bL32 (66 aa).

The segment covering 1–19 has biased composition (basic residues); sequence MAIVPKRKTSKQRKHKRNT. A disordered region spans residues 1–21; sequence MAIVPKRKTSKQRKHKRNTHS.

This sequence belongs to the bacterial ribosomal protein bL32 family.

This Mycoplasmopsis synoviae (strain 53) (Mycoplasma synoviae) protein is Large ribosomal subunit protein bL32.